A 183-amino-acid polypeptide reads, in one-letter code: uncharacterized protein (183 aa).

The region spanning 55–183 is the GGDEF domain; sequence PRAAVLLVDL…RSRRGSRPAR (129 aa).

Might be involved in pSAM2 replication control. This is an uncharacterized protein from Streptomyces ambofaciens.